Consider the following 502-residue polypeptide: Histidine--tRNA ligase (502 aa).

This sequence belongs to the class-II aminoacyl-tRNA synthetase family. In terms of assembly, homodimer.

The protein localises to the cytoplasm. It catalyses the reaction tRNA(His) + L-histidine + ATP = L-histidyl-tRNA(His) + AMP + diphosphate + H(+). This chain is Histidine--tRNA ligase (hisS), found in Brucella suis biovar 1 (strain 1330).